The chain runs to 245 residues: 1-(5-phosphoribosyl)-5-[(5-phosphoribosylamino)methylideneamino] imidazole-4-carboxamide isomerase (245 aa).

Catalysis depends on aspartate 7, which acts as the Proton acceptor. Catalysis depends on aspartate 129, which acts as the Proton donor.

It belongs to the HisA/HisF family.

It localises to the cytoplasm. The catalysed reaction is 1-(5-phospho-beta-D-ribosyl)-5-[(5-phospho-beta-D-ribosylamino)methylideneamino]imidazole-4-carboxamide = 5-[(5-phospho-1-deoxy-D-ribulos-1-ylimino)methylamino]-1-(5-phospho-beta-D-ribosyl)imidazole-4-carboxamide. Its pathway is amino-acid biosynthesis; L-histidine biosynthesis; L-histidine from 5-phospho-alpha-D-ribose 1-diphosphate: step 4/9. The protein is 1-(5-phosphoribosyl)-5-[(5-phosphoribosylamino)methylideneamino] imidazole-4-carboxamide isomerase of Salmonella dublin (strain CT_02021853).